The sequence spans 486 residues: Kynurenine 3-monooxygenase (486 aa).

FAD is bound by residues Val-19, 37-40 (YEAR), and Ala-57. L-kynurenine-binding residues include Arg-85 and Tyr-99. FAD contacts are provided by residues Arg-111, Leu-136, Thr-172, Asp-304, and 317–318 (MN). Residues Asn-363 and Tyr-398 each coordinate L-kynurenine. Transmembrane regions (helical) follow at residues 385–404 (FLHA…VTFS) and 425–445 (GLFF…IHYM). A glycan (N-linked (GlcNAc...) asparagine) is linked at Asn-465.

Belongs to the aromatic-ring hydroxylase family. KMO subfamily. FAD is required as a cofactor. As to expression, highest levels in placenta and liver. Detectable in kidney.

Its subcellular location is the mitochondrion outer membrane. It catalyses the reaction L-kynurenine + NADPH + O2 + H(+) = 3-hydroxy-L-kynurenine + NADP(+) + H2O. The protein operates within cofactor biosynthesis; NAD(+) biosynthesis; quinolinate from L-kynurenine: step 1/3. Catalyzes the hydroxylation of L-kynurenine (L-Kyn) to form 3-hydroxy-L-kynurenine (L-3OHKyn). Required for synthesis of quinolinic acid, a neurotoxic NMDA receptor antagonist and potential endogenous inhibitor of NMDA receptor signaling in axonal targeting, synaptogenesis and apoptosis during brain development. Quinolinic acid may also affect NMDA receptor signaling in pancreatic beta cells, osteoblasts, myocardial cells, and the gastrointestinal tract. The sequence is that of Kynurenine 3-monooxygenase from Homo sapiens (Human).